The following is a 480-amino-acid chain: ATP synthase subunit beta (480 aa).

154 to 161 (GGAGVGKT) is a binding site for ATP.

This sequence belongs to the ATPase alpha/beta chains family. F-type ATPases have 2 components, CF(1) - the catalytic core - and CF(0) - the membrane proton channel. CF(1) has five subunits: alpha(3), beta(3), gamma(1), delta(1), epsilon(1). CF(0) has four main subunits: a(1), b(1), b'(1) and c(9-12).

The protein resides in the cell inner membrane. The enzyme catalyses ATP + H2O + 4 H(+)(in) = ADP + phosphate + 5 H(+)(out). In terms of biological role, produces ATP from ADP in the presence of a proton gradient across the membrane. The catalytic sites are hosted primarily by the beta subunits. The protein is ATP synthase subunit beta of Bradyrhizobium sp. (strain ORS 278).